The chain runs to 109 residues: Flagellar hook-basal body complex protein FliE (109 aa).

Positions 1–38 (MQAIHNDKSLLSPFSELNTDNRTKREESGSTFKEQKGG) are disordered. Residues 19 to 38 (TDNRTKREESGSTFKEQKGG) are compositionally biased toward basic and acidic residues.

Belongs to the FliE family.

It localises to the bacterial flagellum basal body. The polypeptide is Flagellar hook-basal body complex protein FliE (Helicobacter pylori (strain P12)).